Consider the following 191-residue polypeptide: Large ribosomal subunit protein uL6 (191 aa).

It belongs to the universal ribosomal protein uL6 family. As to quaternary structure, component of the large ribosomal subunit. Mature ribosomes consist of a small (40S) and a large (60S) subunit. The 40S subunit contains about 32 different proteins and 1 molecule of RNA (18S). The 60S subunit contains 45 different proteins and 3 molecules of RNA (25S, 5.8S and 5S).

It localises to the cytoplasm. Functionally, component of the ribosome, a large ribonucleoprotein complex responsible for the synthesis of proteins in the cell. The small ribosomal subunit (SSU) binds messenger RNAs (mRNAs) and translates the encoded message by selecting cognate aminoacyl-transfer RNA (tRNA) molecules. The large subunit (LSU) contains the ribosomal catalytic site termed the peptidyl transferase center (PTC), which catalyzes the formation of peptide bonds, thereby polymerizing the amino acids delivered by tRNAs into a polypeptide chain. The nascent polypeptides leave the ribosome through a tunnel in the LSU and interact with protein factors that function in enzymatic processing, targeting, and the membrane insertion of nascent chains at the exit of the ribosomal tunnel. This Candida albicans (strain SC5314 / ATCC MYA-2876) (Yeast) protein is Large ribosomal subunit protein uL6.